Here is a 515-residue protein sequence, read N- to C-terminus: ATP-dependent rRNA helicase rrp-3 (515 aa).

The interval 1 to 85 (MSTKRRKTSD…LDVAPEQEEV (85 aa)) is disordered. The segment covering 15–24 (LKKAAAPSAP) has biased composition (low complexity). The span at 25–55 (ELKKEKKVKDKSTKDKSSTKKTEKTEKKQDA) shows a compositional bias: basic and acidic residues. Residues 69–85 (TEEDSVTLDVAPEQEEV) are compositionally biased toward acidic residues. A Q motif motif is present at residues 90 to 118 (KTFKDLGIVDALCEACERLGYKNPTPIQE). The Helicase ATP-binding domain occupies 121–292 (IPLALQNRDI…RASLRDPLKV (172 aa)). Residue 134-141 (AETGSGKT) participates in ATP binding. The DEAD box motif lies at 240–243 (DEAD). A Helicase C-terminal domain is found at 316 to 464 (HKDTYLVYLC…EYPLEKDEVM (149 aa)). The segment at 482 to 515 (KSLMENQGKHGGLLKRKRGNGQGGGRDHMDAEEG) is disordered. The span at 506-515 (GRDHMDAEEG) shows a compositional bias: basic and acidic residues.

It belongs to the DEAD box helicase family. DDX47/RRP3 subfamily.

It is found in the nucleus. In terms of biological role, required for pre-ribosomal RNA processing. Involved in the maturation of the 35S-pre-rRNA and to its cleavage to mature 18S rRNA. The sequence is that of ATP-dependent rRNA helicase rrp-3 (rrp-3) from Neurospora crassa (strain ATCC 24698 / 74-OR23-1A / CBS 708.71 / DSM 1257 / FGSC 987).